The chain runs to 370 residues: tRNA-specific 2-thiouridylase MnmA (370 aa).

Residues 11 to 18 and Met37 contribute to the ATP site; that span reads GMSGGVDS. An interaction with target base in tRNA region spans residues 97–99; that stretch reads NPD. Cys102 (nucleophile) is an active-site residue. Cys102 and Cys199 are joined by a disulfide. Gly126 provides a ligand contact to ATP. Residues 149–151 form an interaction with tRNA region; it reads KDQ. Cys199 functions as the Cysteine persulfide intermediate in the catalytic mechanism. The interaction with tRNA stretch occupies residues 307–308; that stretch reads RY.

It belongs to the MnmA/TRMU family.

The protein resides in the cytoplasm. The enzyme catalyses S-sulfanyl-L-cysteinyl-[protein] + uridine(34) in tRNA + AH2 + ATP = 2-thiouridine(34) in tRNA + L-cysteinyl-[protein] + A + AMP + diphosphate + H(+). Catalyzes the 2-thiolation of uridine at the wobble position (U34) of tRNA, leading to the formation of s(2)U34. The polypeptide is tRNA-specific 2-thiouridylase MnmA (Staphylococcus haemolyticus (strain JCSC1435)).